The sequence spans 153 residues: Aspartate carbamoyltransferase regulatory chain (153 aa).

C109, C114, C138, and C141 together coordinate Zn(2+).

The protein belongs to the PyrI family. In terms of assembly, contains catalytic and regulatory chains. Zn(2+) serves as cofactor.

Involved in allosteric regulation of aspartate carbamoyltransferase. This chain is Aspartate carbamoyltransferase regulatory chain, found in Vibrio parahaemolyticus serotype O3:K6 (strain RIMD 2210633).